The following is a 339-amino-acid chain: Hairy/enhancer-of-split related with YRPW motif protein 2 (339 aa).

Residues 1–52 (MKRPCEETTSESDLDETIDVGSENNYPGHATSSVMRSNSPTTTSQIMARKKR) are disordered. Acidic residues predominate over residues 8–18 (TTSESDLDETI). The segment covering 22 to 46 (SENNYPGHATSSVMRSNSPTTTSQI) has biased composition (polar residues). The transcriptional repression and interaction with NCOR1 and SIN3A stretch occupies residues 47-116 (MARKKRRGII…GGKGYFDAHA (70 aa)). Residues 48–103 (ARKKRRGIIEKRRRDRINNSLSELRRLVPTAFEKQGSAKLEKAEILQMTVDHLKML) form the bHLH domain. In terms of domain architecture, Orange spans 122–157 (MSIGFRECLTEVARYLSSVEGLDPSDPLRVRLVSHL). The interval 310-339 (SVSAASSPQQTSTGTNNKPYQPWGTEVGAF) is disordered. Positions 318–328 (QQTSTGTNNKP) are enriched in polar residues. A YQPW motif motif is present at residues 329–332 (YQPW).

The protein belongs to the HEY family. As to quaternary structure, may self-associate. Interacts with ARNT. Interacts with GATA4, GATA6, HES1 and HEYL. Interacts with HDAC1, NCOR1 and SIN3A. In terms of tissue distribution, highly expressed in the aorta, lower expression detected in the heart, brain, kidney, lung, muscle, ovary and testis.

Its subcellular location is the nucleus. Functionally, transcriptional repressor which functions as a downstream effector of Notch signaling in cardiovascular development. Specifically required for the Notch-induced endocardial epithelial to mesenchymal transition, which is itself criticial for cardiac valve and septum development. May be required in conjunction with HEY1 to specify arterial cell fate or identity. Promotes maintenance of neuronal precursor cells and glial versus neuronal fate specification. Binds preferentially to the canonical E box sequence 5'-CACGTG-3'. Represses transcription by the cardiac transcriptional activators GATA4 and GATA6 and by the neuronal bHLH factors ASCL1/MASH1 and NEUROD4/MATH3. The sequence is that of Hairy/enhancer-of-split related with YRPW motif protein 2 (Hey2) from Mus musculus (Mouse).